The chain runs to 1862 residues: Chitin synthase V (1862 aa).

A disordered region spans residues 1 to 26 (MAMSLPQLGGAGGPHTQPSLPSLPAH). Residues 1 to 778 (MAMSLPQLGG…CWMEIAQLGE (778 aa)) form the Myosin motor domain. Asn63 carries N-linked (GlcNAc...) asparagine glycosylation. 104 to 111 (GESGAGKS) lines the ATP pocket. N-linked (GlcNAc...) asparagine glycans are attached at residues Asn123, Asn429, Asn483, Asn522, and Asn560. The tract at residues 592 to 643 (TVSSKPMRAPSVMSRKTHRTGRPSTAYKRQQQEAMEELDQQSQAGESKKNAK) is disordered. Residues 658–682 (LDNVQKAVTDPGTNSYFVFCLKPND) form an actin-binding region. Transmembrane regions (helical) follow at residues 884-904 (WVALVFFLTWFIPDFAIRLIG) and 923-943 (MLIWLMCAVAAFFMVGFPMLI). One can recognise a Cytochrome b5 heme-binding domain in the interval 947–1009 (QYVYSSNELS…YAGKDISALF (63 aa)). 3 N-linked (GlcNAc...) asparagine glycosylation sites follow: Asn1036, Asn1063, and Asn1192. The helical transmembrane segment at 1202–1222 (FILAISVMLASILVFKFLAAL) threads the bilayer. N-linked (GlcNAc...) asparagine glycans are attached at residues Asn1459 and Asn1565. 3 consecutive transmembrane segments (helical) span residues 1590 to 1610 (FVVFIDLLSTIVQPVIVMYIV), 1623 to 1643 (VPITAFLLLGAIYGLQAVIFI), and 1650 to 1670 (MVGWMIMYIAAIPVFSFGLPL). The N-linked (GlcNAc...) asparagine glycan is linked to Asn1771. A DEK-C domain is found at 1804 to 1859 (MPSDDALLAEIRDILKTADLMTVTKKGIKQELERRFNVPLDAKRAYINSATEALLS).

This sequence in the N-terminal section; belongs to the TRAFAC class myosin-kinesin ATPase superfamily. Myosin family. In the C-terminal section; belongs to the chitin synthase family. Class V subfamily.

The protein localises to the cell membrane. The enzyme catalyses [(1-&gt;4)-N-acetyl-beta-D-glucosaminyl](n) + UDP-N-acetyl-alpha-D-glucosamine = [(1-&gt;4)-N-acetyl-beta-D-glucosaminyl](n+1) + UDP + H(+). Functionally, polymerizes chitin, a structural polymer of the cell wall and septum, by transferring the sugar moiety of UDP-GlcNAc to the non-reducing end of the growing chitin polymer. ChsV and chsVb do perform additive, but not redundant, functions in septum formation. Involved in cell wall integrity and resistance to antimicrobial plant defense compounds such as the tomato phytoanticipin alpha-tomatine or H(2)O(2), and plays a crucial role in vascular colonization and pathogenicity. Also plays an important role in nuclear sorting or distribution. The protein is Chitin synthase V of Fusarium oxysporum f. sp. lycopersici (strain 4287 / CBS 123668 / FGSC 9935 / NRRL 34936) (Fusarium vascular wilt of tomato).